The following is a 367-amino-acid chain: Cyclin-D3-2 (367 aa).

Residues 324-335 (STTASVSSSSSS) are compositionally biased toward low complexity. The disordered stretch occupies residues 324 to 347 (STTASVSSSSSSPEPLLKRRRVQE).

Belongs to the cyclin family. Cyclin D subfamily. In terms of assembly, interacts with CDKA-1. As to expression, expressed in developing vegetative and floral primordia.

Its function is as follows. Promotes divisions in the guard cells (GCs) after the guard mother cells (GMC) symmetric division when in the presence of CDKA-1. This is Cyclin-D3-2 (CYCD3-2) from Arabidopsis thaliana (Mouse-ear cress).